Here is a 454-residue protein sequence, read N- to C-terminus: Protein pid-2 (454 aa).

The segment at 31-61 (VQNNQKEHPPVQEIKTVSSKSKEHRVSSSRK) is disordered. Over residues 50–61 (KSKEHRVSSSRK) the composition is skewed to basic and acidic residues.

In terms of assembly, may interact with pid-4, pid-5, app-1 and prmt-5. Expressed throughout the mitotic and meiotic regions of the germline and in oocytes.

The protein localises to the cytoplasm. It localises to the perinuclear region. Its subcellular location is the cytoplasmic granule. Involved in gene silencing mediated by a class of 21 nucleotide PIWI-interacting RNAs (piRNAs) that possess a uracil residue at the 5'-end (also called 21U-RNAs) and that guide the Piwi protein prg-1 to its DNA targets for silencing. Not required for the biogenesis of 21U-RNAs. May also be involved in gene silencing mediated by 22G-siRNAs (a class of 22 nucleotide endogenous small interfering RNAs (siRNAs) that possess a triphosphorylated guanine residue at the 5'-end) and 26G-siRNAs (a class of 26 nucleotide siRNAs that possess a guanine residue at the 5'-end). Required for the biogenesis of secondary and tertiary 22G-siRNAs from many loci. Specifically, promotes the production of 22G-siRNAs from the 5' end of target mRNAs. May play a role in the production of 26G-siRNAs. Plays a role in small RNA-directed transgenerational epigenetic inheritance (also called RNAe) over several generations and germline immortality. Together with the argonaut protein hrde-1, promotes the silencing of the DNA transposable element Tc1. Required for the formation of liquid-like condensates in the cytoplasm called Z granules, playing a role in maintaining their assembly, viscosity and morphology in adult germ cells, and localization in early embryos. The sequence is that of Protein pid-2 from Caenorhabditis elegans.